We begin with the raw amino-acid sequence, 545 residues long: Myotubularin-related protein 9 (545 aa).

The residue at position 1 (Met1) is an N-acetylmethionine. One can recognise a GRAM domain in the interval 4-99 (AELIKTPRVD…LNIASSIEAL (96 aa)). Residues 123 to 498 (GWHSFLPEQE…QSLQLWEGIF (376 aa)) enclose the Myotubularin phosphatase domain. The stretch at 508-542 (LDEAYEEMVNIIEYNKELQAKVNVLRRQLAELETE) forms a coiled coil.

This sequence belongs to the protein-tyrosine phosphatase family. Non-receptor class myotubularin subfamily. In terms of assembly, homodimer. Heterodimer (via C-terminus) with lipid phosphatase MTMR6 (via C-terminus). Heterodimer (via coiled coil domain) with lipid phosphatase MTMR7 (via C-terminus).

It localises to the cytoplasm. Its subcellular location is the cell projection. It is found in the ruffle membrane. The protein localises to the perinuclear region. The protein resides in the endoplasmic reticulum. Its function is as follows. Acts as an adapter for myotubularin-related phosphatases. Increases lipid phosphatase MTMR6 catalytic activity, specifically towards phosphatidylinositol 3,5-bisphosphate, and MTMR6 binding affinity for phosphorylated phosphatidylinositols. Positively regulates lipid phosphatase MTMR7 catalytic activity. The formation of the MTMR6-MTMR9 complex, stabilizes both MTMR6 and MTMR9 protein levels. Plays a role in the late stages of macropinocytosis possibly by regulating MTMR6-mediated dephosphorylation of phosphatidylinositol 3-phosphate in membrane ruffles. Negatively regulates DNA damage-induced apoptosis, in part via its association with MTMR6. Does not bind mono-, di- and tri-phosphorylated phosphatidylinositols, phosphatidic acid and phosphatidylserine. The polypeptide is Myotubularin-related protein 9 (Mtmr9) (Mus musculus (Mouse)).